We begin with the raw amino-acid sequence, 311 residues long: Phosphopantothenate--cysteine ligase (311 aa).

N-acetylalanine is present on A2.

It belongs to the PPC synthetase family. As to quaternary structure, homodimer.

The catalysed reaction is (R)-4'-phosphopantothenate + L-cysteine + ATP = N-[(R)-4-phosphopantothenoyl]-L-cysteine + AMP + diphosphate + H(+). The enzyme catalyses (R)-4'-phosphopantothenate + L-cysteine + CTP = N-[(R)-4-phosphopantothenoyl]-L-cysteine + CMP + diphosphate + H(+). It functions in the pathway cofactor biosynthesis; coenzyme A biosynthesis; CoA from (R)-pantothenate: step 2/5. In terms of biological role, catalyzes the second step in the biosynthesis of coenzyme A from vitamin B5, where cysteine is conjugated to 4'-phosphopantothenate to form 4-phosphopantothenoylcysteine. Has a preference for ATP over CTP as a cosubstrate. This is Phosphopantothenate--cysteine ligase (Ppcs) from Mus musculus (Mouse).